A 313-amino-acid chain; its full sequence is MIIVTGGAGMIGSNIVKALNEIGINDILVVDNLKNGRKFKNLVDLDITDYMDRDDFLTQIMAGDNFGPIEAVFHEGACSATTEWDGKYMMLNNYEYSKELLHYCLEREIPFLYASSAATYGETTVFKEEREYEGALNVYGYSKQQFDNYVRRLWQDAEEHGETLSQITGFRYFNVYGPREQHKGSMASVAFHLNNQILAGENPKLFAGSEQFKRDFIYVGDVCKVNLWFMQNGVSGIFNCGTGNAESFEEVAKAVIKHHGKGEIETIPFPEHLKGAYQEFTQADLTKLRAAGCDVEFKTVAEGVAEYMAIVNG.

NADP(+) is bound by residues 10 to 11, 31 to 32, Lys-38, Arg-53, 75 to 79, and Asn-92; these read MI, DN, and EGACS. Tyr-139 functions as the Proton acceptor in the catalytic mechanism. Lys-143 provides a ligand contact to NADP(+). Substrate is bound at residue Asn-174. Positions 175 and 183 each coordinate NADP(+). The active-site Proton acceptor is Lys-183. Substrate-binding positions include Ser-185, His-192, 206-209, Arg-214, and Tyr-277; that span reads FAGS.

The protein belongs to the NAD(P)-dependent epimerase/dehydratase family. HldD subfamily. Homopentamer. NADP(+) is required as a cofactor.

It catalyses the reaction ADP-D-glycero-beta-D-manno-heptose = ADP-L-glycero-beta-D-manno-heptose. Its pathway is nucleotide-sugar biosynthesis; ADP-L-glycero-beta-D-manno-heptose biosynthesis; ADP-L-glycero-beta-D-manno-heptose from D-glycero-beta-D-manno-heptose 7-phosphate: step 4/4. It participates in bacterial outer membrane biogenesis; LPS core biosynthesis. Functionally, catalyzes the interconversion between ADP-D-glycero-beta-D-manno-heptose and ADP-L-glycero-beta-D-manno-heptose via an epimerization at carbon 6 of the heptose. The sequence is that of ADP-L-glycero-D-manno-heptose-6-epimerase from Vibrio vulnificus (strain CMCP6).